Consider the following 401-residue polypeptide: Imidazolonepropionase (401 aa).

Fe(3+) is bound by residues histidine 70 and histidine 72. 2 residues coordinate Zn(2+): histidine 70 and histidine 72. Arginine 79, tyrosine 142, and histidine 175 together coordinate 4-imidazolone-5-propanoate. Residue tyrosine 142 participates in N-formimidoyl-L-glutamate binding. A Fe(3+)-binding site is contributed by histidine 238. Histidine 238 serves as a coordination point for Zn(2+). 4-imidazolone-5-propanoate is bound at residue glutamine 241. Residue aspartate 313 coordinates Fe(3+). Aspartate 313 serves as a coordination point for Zn(2+). Residues asparagine 315 and glycine 317 each coordinate N-formimidoyl-L-glutamate. Threonine 318 provides a ligand contact to 4-imidazolone-5-propanoate.

Belongs to the metallo-dependent hydrolases superfamily. HutI family. The cofactor is Zn(2+). Requires Fe(3+) as cofactor.

The protein localises to the cytoplasm. The catalysed reaction is 4-imidazolone-5-propanoate + H2O = N-formimidoyl-L-glutamate. It participates in amino-acid degradation; L-histidine degradation into L-glutamate; N-formimidoyl-L-glutamate from L-histidine: step 3/3. Catalyzes the hydrolytic cleavage of the carbon-nitrogen bond in imidazolone-5-propanoate to yield N-formimidoyl-L-glutamate. It is the third step in the universal histidine degradation pathway. In Xanthomonas campestris pv. campestris (strain 8004), this protein is Imidazolonepropionase.